We begin with the raw amino-acid sequence, 504 residues long: Peptidyl-prolyl cis-trans isomerase-like 4 (504 aa).

One can recognise a PPIase cyclophilin-type domain in the interval 1–169 (MSVMLETSLG…QNIRIRHVEI (169 aa)). Residues 246 to 324 (NILFVCKLNP…RRIWVDFSQS (79 aa)) form the RRM domain. Residues 330–339 (RSMLSSSNPT) show a composition bias toward polar residues. The disordered stretch occupies residues 330–504 (RSMLSSSNPT…RERDDRDRRR (175 aa)). Residues 340-354 (GRGGRGGRGGRGGNY) show a composition bias toward gly residues. 2 stretches are compositionally biased toward basic and acidic residues: residues 356–381 (GRRD…DSRR) and 416–504 (SKRD…DRRR).

This sequence belongs to the cyclophilin-type PPIase family. PPIL4 subfamily.

The protein resides in the nucleus. The enzyme catalyses [protein]-peptidylproline (omega=180) = [protein]-peptidylproline (omega=0). PPIases accelerate the folding of proteins. It catalyzes the cis-trans isomerization of proline imidic peptide bonds in oligopeptides. The protein is Peptidyl-prolyl cis-trans isomerase-like 4 (CYP6) of Cryptococcus neoformans var. neoformans serotype D (strain B-3501A) (Filobasidiella neoformans).